Consider the following 360-residue polypeptide: MTKMKMDVTIELDLDGDDWEEVDVLSDKCVEDILEDVHIDDPILVSDVRITLPANIRIKNFKKEIRDLILANLDVPTTVSAGSWQIVSSFLRGIEYSEIGGRERNSKLSWKPFEDMHAQILVNALAYAQRVDILVKLKSYIDSNSYLKNVPEPMFAFADTDSMASTTTFSEYAEPVHSMNARKKILLLHYETTSKEKEDFKWFKCNLKNVLEKERKEGKDLEVFDVKVWEKDDRGNVFQELEKHYDLFPHIVVCFNKSYIEATKPNSKSKMPQFRKSISDKLNVEFHMNGNRNLRGRCVLMSEVEKVTDTYWAAVTNQYPFPGSFEPFVKRLLRDGKVKKQSHNNANDHHEDSMNYSITQ.

Residues 339 to 360 (KKQSHNNANDHHEDSMNYSITQ) are disordered.

In terms of assembly, interacts with the receptor complex composed of ilcr-1 and ilcr-2. Also interacts with pik-1. As to expression, expressed in neurons.

May act as an adapter to facilitate downstream signaling for the receptor complex composed of ilcr-1 and ilcr-2, which is a signaling complex that modulates neuronal activity and animal behavior in response to sensory neuron input. In Caenorhabditis elegans, this protein is ACT1-like protein.